The chain runs to 202 residues: Energy-coupling factor transporter transmembrane protein BioN (202 aa).

A run of 3 helical transmembrane segments spans residues 21–40 (LLSL…LLLL), 44–63 (VLVA…EALL), and 68–90 (IFLT…AALV).

Belongs to the CbiQ family. Part of a biotin transporter complex composed of BioM, BioN and BioY.

The protein localises to the cell inner membrane. In terms of biological role, involved in biotin uptake. In Rhizobium etli (strain ATCC 51251 / DSM 11541 / JCM 21823 / NBRC 15573 / CFN 42), this protein is Energy-coupling factor transporter transmembrane protein BioN (bioN).